Consider the following 138-residue polypeptide: 1,4-dihydroxy-2-naphthoyl-CoA hydrolase (138 aa).

The active site involves Asp15.

This sequence belongs to the 4-hydroxybenzoyl-CoA thioesterase family. DHNA-CoA hydrolase subfamily.

The enzyme catalyses 1,4-dihydroxy-2-naphthoyl-CoA + H2O = 1,4-dihydroxy-2-naphthoate + CoA + H(+). Its pathway is cofactor biosynthesis; phylloquinone biosynthesis. It functions in the pathway quinol/quinone metabolism; 1,4-dihydroxy-2-naphthoate biosynthesis; 1,4-dihydroxy-2-naphthoate from chorismate: step 7/7. Catalyzes the hydrolysis of 1,4-dihydroxy-2-naphthoyl-CoA (DHNA-CoA) to 1,4-dihydroxy-2-naphthoate (DHNA), a reaction involved in phylloquinone (vitamin K1) biosynthesis. The sequence is that of 1,4-dihydroxy-2-naphthoyl-CoA hydrolase from Trichodesmium erythraeum (strain IMS101).